We begin with the raw amino-acid sequence, 310 residues long: ER-derived vesicles protein ERV29 (310 aa).

The Cytoplasmic portion of the chain corresponds to 1-108; that stretch reads MSYRGPIGNF…YLNKWKHYPY (108 aa). The disordered stretch occupies residues 11–31; it reads GGMPMSSSQGPYSGGAQFRSN. Residues 109–129 form a helical membrane-spanning segment; it reads FFVVVFLVVVTVSMLIGASLL. Over 130–137 the chain is Lumenal; the sequence is VLRKQTNY. The helical transmembrane segment at 138–158 threads the bilayer; it reads ATGVLCACVISQALVYGLFTG. Over 159–209 the chain is Cytoplasmic; sequence SSFVLRNFSVIGGLLIAFSDSIVQNKTTFGMLPELNSKNDKAKGYLLFAGR. Residues 210 to 230 traverse the membrane as a helical segment; it reads ILIVLMFIAFTFSKSWFTVVL. The Lumenal portion of the chain corresponds to 231-245; sequence TIIGTICFAIGYKTK. Residues 246 to 266 form a helical membrane-spanning segment; that stretch reads FASIMLGLILTFYNITLNNYW. At 267 to 310 the chain is on the cytoplasmic side; it reads FYNNTKRDFLKYEFYQNLSIIGGLLLVTNTGAGELSVDEKKKIY. The short motif at 307 to 310 is the Di-lysine motif element; sequence KKIY.

It belongs to the SURF4 family.

The protein localises to the endoplasmic reticulum membrane. In terms of biological role, constituent of COPII-coated endoplasmic reticulum-derived transport vesicles. Required for efficient transport of a subset of secretory proteins to the Golgi. The C-terminal di-lysine motif is required for exit from the endoplasmic reticulum. Required directly for packaging glycosylated pro-alpha-factor into COPII vesicles. Facilitates retrograde transport from the Golgi to the endoplasmic reticulum. This chain is ER-derived vesicles protein ERV29 (ERV29), found in Saccharomyces cerevisiae (strain ATCC 204508 / S288c) (Baker's yeast).